The primary structure comprises 665 residues: Methionine--tRNA ligase (665 aa).

Residues 16 to 26 (YYPSGKAHIGH) carry the 'HIGH' region motif. A 'KMSKS' region motif is present at residues 311-315 (KMSKS). Residue lysine 314 coordinates ATP. A tRNA-binding domain is found at 564 to 665 (DFDKIDLRVA…SALPNGAKVK (102 aa)).

It belongs to the class-I aminoacyl-tRNA synthetase family. MetG type 2B subfamily. As to quaternary structure, homodimer.

Its subcellular location is the cytoplasm. The enzyme catalyses tRNA(Met) + L-methionine + ATP = L-methionyl-tRNA(Met) + AMP + diphosphate. Is required not only for elongation of protein synthesis but also for the initiation of all mRNA translation through initiator tRNA(fMet) aminoacylation. The sequence is that of Methionine--tRNA ligase from Listeria monocytogenes serotype 4b (strain F2365).